A 416-amino-acid chain; its full sequence is Lipoyl synthase, mitochondrial (416 aa).

A mitochondrion-targeting transit peptide spans 1-33 (MAAPTRSLRRLSSFRTTISPSLTVTAPIGCRSY). [4Fe-4S] cluster is bound by residues cysteine 132, cysteine 137, cysteine 143, cysteine 163, cysteine 167, cysteine 170, and serine 378. In terms of domain architecture, Radical SAM core spans 148 to 367 (DKSSATATIM…RQRALDMGFL (220 aa)). A disordered region spans residues 396–416 (GSGTAERTVDQTAATTDEATR). Over residues 405-416 (DQTAATTDEATR) the composition is skewed to polar residues.

It belongs to the radical SAM superfamily. Lipoyl synthase family. The cofactor is [4Fe-4S] cluster.

The protein resides in the mitochondrion. It catalyses the reaction [[Fe-S] cluster scaffold protein carrying a second [4Fe-4S](2+) cluster] + N(6)-octanoyl-L-lysyl-[protein] + 2 oxidized [2Fe-2S]-[ferredoxin] + 2 S-adenosyl-L-methionine + 4 H(+) = [[Fe-S] cluster scaffold protein] + N(6)-[(R)-dihydrolipoyl]-L-lysyl-[protein] + 4 Fe(3+) + 2 hydrogen sulfide + 2 5'-deoxyadenosine + 2 L-methionine + 2 reduced [2Fe-2S]-[ferredoxin]. It functions in the pathway protein modification; protein lipoylation via endogenous pathway; protein N(6)-(lipoyl)lysine from octanoyl-[acyl-carrier-protein]: step 2/2. In terms of biological role, catalyzes the radical-mediated insertion of two sulfur atoms into the C-6 and C-8 positions of the octanoyl moiety bound to the lipoyl domains of lipoate-dependent enzymes, thereby converting the octanoylated domains into lipoylated derivatives. The chain is Lipoyl synthase, mitochondrial from Penicillium rubens (strain ATCC 28089 / DSM 1075 / NRRL 1951 / Wisconsin 54-1255) (Penicillium chrysogenum).